A 468-amino-acid polypeptide reads, in one-letter code: Meiotically up-regulated gene 111 protein (468 aa).

Transmembrane regions (helical) follow at residues 13–33 (LVLI…NSVT), 59–79 (IVSA…VPFY), 92–112 (VFTT…SILY), 116–136 (FPTC…ISGT), 158–178 (IVVL…LGSI), 190–210 (LISW…AVFF), 285–305 (PIPI…FFDI), 330–350 (FGSL…GFSV), 356–376 (TMLI…FATA), 382–402 (LALF…LVAA), 417–437 (ALLE…AFIV), and 446–466 (FFIG…LLLG).

It is found in the membrane. In terms of biological role, has a role in meiosis. The polypeptide is Meiotically up-regulated gene 111 protein (mug111) (Schizosaccharomyces pombe (strain 972 / ATCC 24843) (Fission yeast)).